Consider the following 351-residue polypeptide: Calcium uniporter protein, mitochondrial (351 aa).

A mitochondrion-targeting transit peptide spans 1–50 (MAAAAGRSLLLLLSSRGGGGGGAGGCGALTAGCFPGLGVSRHRQQQHHRT). Topologically, residues 51-233 (VHQRIASWQN…ISRKAEKRTT (183 aa)) are mitochondrial matrix. A phosphoserine; by CaMK2 mark is found at S57 and S92. Positions 75–165 (VTVVYQNGLP…LTYHVRPPKR (91 aa)) are N-terminal MCU domain. C97 is modified (S-glutathionyl cysteine). The stretch at 192-223 (IEQHQLNKERELIERLEDLKEQLAPLEKVRIE) forms a coiled coil. The helical transmembrane segment at 234–255 (LVLWGGLAYMATQFGILARLTW) threads the bilayer. Residues 256–262 (WEYSWDI) are Mitochondrial intermembrane-facing. The short motif at 260-268 (WDIMEPVTY) is the Selectivity filter element. The helical transmembrane segment at 263-284 (MEPVTYFITYGSAMAMYAYFVM) threads the bilayer. Ca(2+) is bound at residue E264. The tract at residues 285–290 (TRQEYV) is juxtamembrane helix. Over 285–351 (TRQEYVYPEA…LPLRQIGEKD (67 aa)) the chain is Mitochondrial matrix. Positions 311–339 (RFDLEKYNQLKDAIAQAEMDLKRLRDPLQ) form a coiled coil. K332 bears the N6-acetyllysine mark.

The protein belongs to the MCU (TC 1.A.77) family. In terms of assembly, homotetramer. Component of the uniplex complex, composed of MCU, EMRE/SMDT1, MICU1 and MICU2 (or MICU3) in a 4:4:1:1 stoichiometry. Interacts with CCDC109B/MCUB; this inhibits channel activity. Interacts with MCUR1. Interactions with MICU1 and MCUR1 are mutually exclusive. Interacts with SLC25A23. Phosphorylation by CaMK2 in heart leads to increased MCU current. The regulation of MCU by CaMK2 is however subject to discussion: another group was unable to reproduce these results. Phosphorylated on tyrosines by PTK2B/PYK2, promoting oligomerization. In terms of processing, glutathionylation at Cys-97 in response to reactive oxygen species (ROS) promotes MCU higher-order assembly, leading to constitutive activation of the MCU channel and mitochondrial calcium overload. Post-translationally, undergoes proteolytic degradation by SPG7.

The protein resides in the mitochondrion inner membrane. The enzyme catalyses Ca(2+)(in) = Ca(2+)(out). MCU channel activity is regulated by the heterodimer composed of MICU1 and either MICU2 or MICU3, which act as calcium-sensors. At low calcium levels, MICU1 occludes the pore of the MCU channel, preventing mitochondrial calcium uptake. At higher calcium levels, calcium-binding to MICU1 and MICU2 (or MICU3) induces a conformational change that weakens MCU-MICU1 interactions and moves the MICU1-MICU2 heterodimer away from the pore, allowing calcium permeation through the channel. MCU channel activity is gated by EMRE/SMDT1 via the juxtamembrane helix loop. Inhibited by ruthenium red or its derivative Ru360. Its function is as follows. Channel-forming and calcium-conducting subunit of the mitochondrial inner membrane calcium uniporter complex (uniplex), which mediates calcium uptake into the mitochondrial matrix. MCU channel activity is regulated by the calcium-sensor subunits of the uniplex MICU1 and MICU2 (or MICU3). Mitochondrial calcium homeostasis plays key roles in cellular physiology and regulates ATP production, cytoplasmic calcium signals and activation of cell death pathways. Involved in buffering the amplitude of systolic calcium rises in cardiomyocytes. While dispensable for baseline homeostatic cardiac function, acts as a key regulator of short-term mitochondrial calcium loading underlying a 'fight-or-flight' response during acute stress: acts by mediating a rapid increase of mitochondrial calcium in pacemaker cells. Participates in mitochondrial permeability transition during ischemia-reperfusion injury. Mitochondrial calcium uptake in skeletal muscle cells is involved in muscle size in adults. Regulates synaptic vesicle endocytosis kinetics in central nerve terminal. Regulates glucose-dependent insulin secretion in pancreatic beta-cells by regulating mitochondrial calcium uptake. Involved in antigen processing and presentation. In Homo sapiens (Human), this protein is Calcium uniporter protein, mitochondrial.